The chain runs to 250 residues: AA9 family lytic polysaccharide monooxygenase AA17 (250 aa).

A signal peptide spans 1-21; the sequence is MAMSKIVSLTGLLASASLVAG. His22 and His107 together coordinate Cu(2+). 2 disulfides stabilise this stretch: Cys77-Cys199 and Cys118-Cys122. An N-linked (GlcNAc...) asparagine glycan is attached at Asn159. O2-binding residues include His185 and Gln194. Tyr196 lines the Cu(2+) pocket.

This sequence belongs to the polysaccharide monooxygenase AA9 family. Requires Cu(2+) as cofactor.

It localises to the secreted. Functionally, lytic polysaccharide monooxygenase (LPMO) that exhibits oxidative cleavage beta-O-4 linkage of lignin resulting in the formation of aromatic compound guaiacol. Catalysis by LPMOs requires the reduction of the active-site copper from Cu(II) to Cu(I) by a reducing agent and H(2)O(2) or O(2) as a cosubstrate. Does not use cellulose, cello-oligosaccharides, xyloglucan, xylan, chitin nor starch as substrates. Able to depolymerize the lignin dimer guaicyl glycerol beta-guaicyl ether (GGE). The chain is AA9 family lytic polysaccharide monooxygenase AA17 from Aspergillus oryzae (strain ATCC 42149 / RIB 40) (Yellow koji mold).